A 2443-amino-acid polypeptide reads, in one-letter code: Spatacsin (2443 aa).

Residue S1955 is modified to Phosphoserine.

Interacts with AP5Z1, AP5B1, AP5S1 and ZFYVE26. In terms of tissue distribution, expressed in all structures of brain, with a high expression in cerebellum. Expressed in cortical projection neurons.

The protein localises to the cytoplasm. The protein resides in the cytosol. Its subcellular location is the nucleus. It localises to the cell projection. It is found in the axon. The protein localises to the dendrite. May play a role in neurite plasticity by maintaining cytoskeleton stability and regulating synaptic vesicle transport. The chain is Spatacsin (SPG11) from Homo sapiens (Human).